Consider the following 719-residue polypeptide: Polyribonucleotide nucleotidyltransferase (719 aa).

2 residues coordinate Mg(2+): aspartate 495 and aspartate 501. In terms of domain architecture, KH spans 562–621; that stretch reads PRRLSFRIDPELIGTVIGPGGRTIKGITERTNTKIDIEDTGIVTVASHDGAAAEEAQKII. Residues 631 to 699 enclose the S1 motif domain; it reads GEYFDGKVTR…NRGRINLTLR (69 aa). A disordered region spans residues 699–719; the sequence is RGVPQDGSDPQPTVILPIGES.

It belongs to the polyribonucleotide nucleotidyltransferase family. Requires Mg(2+) as cofactor.

The protein resides in the cytoplasm. It carries out the reaction RNA(n+1) + phosphate = RNA(n) + a ribonucleoside 5'-diphosphate. Involved in mRNA degradation. Catalyzes the phosphorolysis of single-stranded polyribonucleotides processively in the 3'- to 5'-direction. This is Polyribonucleotide nucleotidyltransferase from Synechococcus sp. (strain RCC307).